Here is a 199-residue protein sequence, read N- to C-terminus: ATP-dependent Clp protease proteolytic subunit (199 aa).

Serine 97 functions as the Nucleophile in the catalytic mechanism. Residue histidine 122 is part of the active site.

This sequence belongs to the peptidase S14 family. Fourteen ClpP subunits assemble into 2 heptameric rings which stack back to back to give a disk-like structure with a central cavity, resembling the structure of eukaryotic proteasomes.

It is found in the cytoplasm. The catalysed reaction is Hydrolysis of proteins to small peptides in the presence of ATP and magnesium. alpha-casein is the usual test substrate. In the absence of ATP, only oligopeptides shorter than five residues are hydrolyzed (such as succinyl-Leu-Tyr-|-NHMec, and Leu-Tyr-Leu-|-Tyr-Trp, in which cleavage of the -Tyr-|-Leu- and -Tyr-|-Trp bonds also occurs).. In terms of biological role, cleaves peptides in various proteins in a process that requires ATP hydrolysis. Has a chymotrypsin-like activity. Plays a major role in the degradation of misfolded proteins. This Geotalea uraniireducens (strain Rf4) (Geobacter uraniireducens) protein is ATP-dependent Clp protease proteolytic subunit.